We begin with the raw amino-acid sequence, 445 residues long: Lateral flagellar hook-associated protein 2 (445 aa).

Residues 388-423 (SGAFKSRKEALQANLDRLSDKQTTLERKYDMSYKRY) adopt a coiled-coil conformation.

It belongs to the FliD family. Homopentamer.

It localises to the secreted. The protein resides in the bacterial flagellum. Its function is as follows. Required for the morphogenesis and for the elongation of the flagellar filament by facilitating polymerization of the flagellin monomers at the tip of growing filament. Forms a capping structure, which prevents flagellin subunits (transported through the central channel of the flagellum) from leaking out without polymerization at the distal end. Essential for swarming motility. This chain is Lateral flagellar hook-associated protein 2 (fliDL), found in Vibrio parahaemolyticus serotype O3:K6 (strain RIMD 2210633).